The sequence spans 394 residues: Flagellin B (394 aa).

Belongs to the bacterial flagellin family.

The protein localises to the secreted. Its subcellular location is the bacterial flagellum. Flagellin is the subunit protein which polymerizes to form the filaments of bacterial flagella. The sequence is that of Flagellin B (flaB) from Rhizobium meliloti (strain 1021) (Ensifer meliloti).